The primary structure comprises 986 residues: MRIRVSYLLVLCFTLIWFRWTVVYSSFSDLDALLKLKESMKGAKAKHHALEDWKFSTSLSAHCSFSGVTCDQNLRVVALNVTLVPLFGHLPPEIGLLEKLENLTISMNNLTDQLPSDLASLTSLKVLNISHNLFSGQFPGNITVGMTELEALDAYDNSFSGPLPEEIVKLEKLKYLHLAGNYFSGTIPESYSEFQSLEFLGLNANSLTGRVPESLAKLKTLKELHLGYSNAYEGGIPPAFGSMENLRLLEMANCNLTGEIPPSLGNLTKLHSLFVQMNNLTGTIPPELSSMMSLMSLDLSINDLTGEIPESFSKLKNLTLMNFFQNKFRGSLPSFIGDLPNLETLQVWENNFSFVLPHNLGGNGRFLYFDVTKNHLTGLIPPDLCKSGRLKTFIITDNFFRGPIPKGIGECRSLTKIRVANNFLDGPVPPGVFQLPSVTITELSNNRLNGELPSVISGESLGTLTLSNNLFTGKIPAAMKNLRALQSLSLDANEFIGEIPGGVFEIPMLTKVNISGNNLTGPIPTTITHRASLTAVDLSRNNLAGEVPKGMKNLMDLSILNLSRNEISGPVPDEIRFMTSLTTLDLSSNNFTGTVPTGGQFLVFNYDKTFAGNPNLCFPHRASCPSVLYDSLRKTRAKTARVRAIVIGIALATAVLLVAVTVHVVRKRRLHRAQAWKLTAFQRLEIKAEDVVECLKEENIIGKGGAGIVYRGSMPNGTDVAIKRLVGQGSGRNDYGFRAEIETLGKIRHRNIMRLLGYVSNKDTNLLLYEYMPNGSLGEWLHGAKGGHLRWEMRYKIAVEAARGLCYMHHDCSPLIIHRDVKSNNILLDADFEAHVADFGLAKFLYDPGASQSMSSIAGSYGYIAPEYAYTLKVDEKSDVYSFGVVLLELIIGRKPVGEFGDGVDIVGWVNKTMSELSQPSDTALVLAVVDPRLSGYPLTSVIHMFNIAMMCVKEMGPARPTMREVVHMLTNPPQSNTSTQDLINL.

Residues methionine 1–serine 25 form the signal peptide. LRR repeat units lie at residues aspartate 71–leucine 97, glutamate 98–leucine 121, serine 123–glycine 145, methionine 146–leucine 170, glutamate 171–serine 196, glutamate 198–leucine 218, methionine 243–leucine 267, threonine 268–methionine 291, serine 293–lysine 314, lysine 316–leucine 339, proline 340–asparagine 363, arginine 365–serine 387, glycine 388–cysteine 411, arginine 412–leucine 435, serine 437–glycine 458, glutamate 459–leucine 482, arginine 483–isoleucine 506, methionine 508–arginine 530, alanine 531–leucine 554, methionine 555–methionine 578, and threonine 579–valine 603. Residues asparagine 80, asparagine 102, asparagine 109, asparagine 128, and asparagine 141 are each glycosylated (N-linked (GlcNAc...) asparagine). N-linked (GlcNAc...) asparagine glycosylation is found at asparagine 255, asparagine 266, and asparagine 279. N-linked (GlcNAc...) asparagine glycosylation is found at asparagine 317 and asparagine 351. N-linked (GlcNAc...) asparagine glycans are attached at residues asparagine 513 and asparagine 518. N-linked (GlcNAc...) asparagine glycans are attached at residues asparagine 561 and asparagine 590. The helical transmembrane segment at isoleucine 645–valine 665 threads the bilayer. In terms of domain architecture, Protein kinase spans leucine 695 to threonine 971. Residues isoleucine 701 to valine 709 and lysine 723 each bind ATP. Aspartate 820 (proton acceptor) is an active-site residue.

Belongs to the protein kinase superfamily. Ser/Thr protein kinase family. Expressed in roots, leaves, stems and flowers.

The protein resides in the cell membrane. The catalysed reaction is L-seryl-[protein] + ATP = O-phospho-L-seryl-[protein] + ADP + H(+). It carries out the reaction L-threonyl-[protein] + ATP = O-phospho-L-threonyl-[protein] + ADP + H(+). Functionally, LRR receptor kinase involved in the regulation of root and shoot growth, and root nodule organogenesis. Involved in long distance nodulation signaling events. Involved in the autoregulation of nodulation (AON), a long distance systemic signaling from root to shoot and back again, which allows legumes to limit the number of root nodules formed based on available nitrogen and previous rhizobial colonization. Acts from shoot to root to control AON. Involved in the regulation of root colonization by arbuscular mycorrhizal (AM) fungi. The polypeptide is Leucine-rich repeat receptor-like kinase protein HAR1 (Lotus japonicus (Lotus corniculatus var. japonicus)).